A 125-amino-acid polypeptide reads, in one-letter code: Small ribosomal subunit protein uS12 (125 aa).

A disordered region spans residues 1–28 (MPTINQLVRKGREKVKKKSKAPALEGNP). Positions 9 to 20 (RKGREKVKKKSK) are enriched in basic residues. Aspartate 89 is subject to 3-methylthioaspartic acid. Residues 104 to 125 (AAGVKDRKQSRSKYGTKRPKEK) are disordered. Basic residues predominate over residues 113-125 (SRSKYGTKRPKEK).

It belongs to the universal ribosomal protein uS12 family. As to quaternary structure, part of the 30S ribosomal subunit. Contacts proteins S8 and S17. May interact with IF1 in the 30S initiation complex.

In terms of biological role, with S4 and S5 plays an important role in translational accuracy. Its function is as follows. Interacts with and stabilizes bases of the 16S rRNA that are involved in tRNA selection in the A site and with the mRNA backbone. Located at the interface of the 30S and 50S subunits, it traverses the body of the 30S subunit contacting proteins on the other side and probably holding the rRNA structure together. The combined cluster of proteins S8, S12 and S17 appears to hold together the shoulder and platform of the 30S subunit. The polypeptide is Small ribosomal subunit protein uS12 (Persephonella marina (strain DSM 14350 / EX-H1)).